We begin with the raw amino-acid sequence, 461 residues long: Phosphatidate cytidylyltransferase 1 (461 aa).

The segment at 1–67 (MLELRHRGSC…IPEIPPSSDR (67 aa)) is disordered. Position 7 is an omega-N-methylarginine (arginine 7). Residues 20 to 56 (PHREGEAAGGDHETESTSDKETDIDDRYGDLDSRTDS) are compositionally biased toward basic and acidic residues. Residues serine 35 and serine 37 each carry the phosphoserine modification. 6 helical membrane passes run 96–116 (MISLFFLIIYMGSFMLMLLVL), 149–169 (FLLCVNYFFYGETVADYFATF), 183–203 (HRFISFALYLAGFCMFVLSLV), 230–250 (LVIQNLFEGMIWFLVPISSVI), 279–299 (GFIGGFFSTVVFGFIAAYVLS), and 357–377 (IALSTFASLIGPFGGFFASGF).

It belongs to the CDS family. Homodimer. Interacts with FOS; this interaction may enhance catalytic activity. It depends on Mg(2+) as a cofactor. In terms of tissue distribution, expressed in adult tissues such as placenta, brain, small intestine, ovary, testis and prostate. Highly expressed in fetal kidney, lung and brain. Lower level in fetal liver.

The protein resides in the endoplasmic reticulum membrane. The catalysed reaction is a 1,2-diacyl-sn-glycero-3-phosphate + CTP + H(+) = a CDP-1,2-diacyl-sn-glycerol + diphosphate. It carries out the reaction 1-octadecanoyl-2-(5Z,8Z,11Z,14Z-eicosatetraenoyl)-sn-glycero-3-phosphate + CTP + H(+) = 1-octadecanoyl-2-(5Z,8Z,11Z,14Z-eicosatetraenoyl)-sn-glycero-3-cytidine-5'-diphosphate + diphosphate. It catalyses the reaction 1-octadecanoyl-2-(9Z,12Z-octadecadienoyl)-sn-glycero-3-phosphate + CTP + H(+) = 1-octadecanoyl-2-(9Z,12Z-octadecadienoyl)-sn-glycero-3-cytidine-5'-diphosphate + diphosphate. The enzyme catalyses 1-hexadecanoyl-2-(5Z,8Z,11Z,14Z-eicosatetraenoyl)-sn-glycero-3-phosphate + CTP + H(+) = 1-hexadecanoyl-2-(5Z,8Z,11Z,14Z-eicosatetraenoyl)-sn-glycero-3-cytidine-5'-diphosphate + diphosphate. The catalysed reaction is 1,2-di-(5Z,8Z,11Z,14Z)-eicosatetraenoyl-sn-glycero-3-phosphate + CTP + H(+) = 1,2-di-(5Z,8Z,11Z,14Z-eicosatetraenoyl)-sn-glycero-3-cytidine-5'-diphosphate + diphosphate. It carries out the reaction 1-octadecanoyl-2-(9Z-octadecenoyl)-sn-glycero-3-phosphate + CTP + H(+) = 1-octadecanoyl-2-(9Z-octadecenoyl)-sn-glycero-3-cytidine-5'-diphosphate + diphosphate. It catalyses the reaction 1-octadecanoyl-2-(4Z,7Z,10Z,13Z,16Z,19Z-docosahexaenoyl)-sn-glycero-3-phosphate + CTP + H(+) = 1-octadecanoyl-2-(4Z,7Z,10Z,13Z,16Z,19Z-docosahexaenoyl)-sn-glycero-3-cytidine-5'-diphosphate + diphosphate. The enzyme catalyses 1,2-di-(9Z,12Z-octadecadienoyl)-sn-glycero-3-phosphate + CTP + H(+) = 1,2-di-(9Z,12Z-octadecadienoyl)-sn-glycero-3-cytidine-5'-diphosphate + diphosphate. The catalysed reaction is 1,2-di-(9Z-octadecenoyl)-sn-glycero-3-phosphate + CTP + H(+) = 1,2-di-(9Z-octadecenoyl)-sn-glycero-3-cytidine-5'-diphosphate + diphosphate. Its pathway is phospholipid metabolism; CDP-diacylglycerol biosynthesis; CDP-diacylglycerol from sn-glycerol 3-phosphate: step 3/3. Its activity is regulated as follows. Inhibited by its anionic phospholipid end products, with phosphatidylinositol-(4,5)- bisphosphate showing the strongest inhibition. Catalyzes the conversion of phosphatidic acid (PA) to CDP-diacylglycerol (CDP-DAG), an essential intermediate in the synthesis of phosphatidylglycerol, cardiolipin and phosphatidylinositol. Exhibits almost no acyl chain preference for PA, showing no discrimination for the sn-1/sn-2 acyl chain composition of PAs. Plays an important role in regulating the growth of lipid droplets which are storage organelles at the center of lipid and energy homeostasis. Positively regulates the differentiation and development of adipocytes. In Homo sapiens (Human), this protein is Phosphatidate cytidylyltransferase 1.